Reading from the N-terminus, the 149-residue chain is Transcriptional repressor NrdR (149 aa).

A zinc finger spans residues 3-34 (CPFCFAVDTKVIDSRLVGGGSSVRRRRQCLVC). Positions 49 to 139 (PRVVKSNDVR…VYRSFEDIKE (91 aa)) constitute an ATP-cone domain.

It belongs to the NrdR family. Zn(2+) serves as cofactor.

In terms of biological role, negatively regulates transcription of bacterial ribonucleotide reductase nrd genes and operons by binding to NrdR-boxes. This Shigella boydii serotype 18 (strain CDC 3083-94 / BS512) protein is Transcriptional repressor NrdR.